The primary structure comprises 571 residues: Cerebral cavernous malformations 2 protein-like (571 aa).

Disordered stretches follow at residues 164 to 193 (AGVDASPGGAGRDPGPPGGAPEKRRVGTAE), 212 to 295 (AEAR…PQDP), and 544 to 571 (LAPDDDDDDEDEPRGSRGGSDAAEDNYL). Residues 184-193 (PEKRRVGTAE) show a composition bias toward basic and acidic residues. Residues 212–223 (AEARAGGGGGGS) show a composition bias toward gly residues. The segment covering 237–251 (WERRQTFSGSWERRH) has biased composition (basic and acidic residues). The span at 253 to 264 (GGGGGGGAGKPG) shows a compositional bias: gly residues. Residues 286–295 (GPNPLDPQDP) are compositionally biased toward pro residues. Residues 545–555 (APDDDDDDEDE) are compositionally biased toward acidic residues.

The protein belongs to the CCM2 family.

This Homo sapiens (Human) protein is Cerebral cavernous malformations 2 protein-like (CCM2L).